We begin with the raw amino-acid sequence, 149 residues long: UPF0260 protein PFL_1499 (149 aa).

The protein belongs to the UPF0260 family.

This Pseudomonas fluorescens (strain ATCC BAA-477 / NRRL B-23932 / Pf-5) protein is UPF0260 protein PFL_1499.